The following is a 473-amino-acid chain: Reticulon-4 receptor (473 aa).

A signal peptide spans 1–26; the sequence is MKRASSGGSRLLAWVLWLQAWRVATP. 2 disulfide bridges follow: Cys27–Cys33 and Cys31–Cys43. One can recognise an LRRNT domain in the interval 27–57; it reads CPGACVCYNEPKVTTSCPQQGLQAVPTGIPA. 8 LRR repeats span residues 58-79, 82-103, 106-128, 131-152, 155-176, 179-200, 203-224, and 227-248; these read SSQR…SFQS, NLTI…AFTG, LLEQ…TFHG, HLHT…LFRG, ALQY…TFRD, NLTH…AFRG, SLDR…AFRD, and RLMT…VLMP. An N-linked (GlcNAc...) asparagine glycan is attached at Asn82. A glycan (N-linked (GlcNAc...) asparagine) is linked at Asn179. One can recognise an LRRCT domain in the interval 260 to 311; the sequence is NPWVCDCRARPLWAWLQKFRGSSSEVPCNLPQRLADRDLKRLAASDLEGCAV. 3 cysteine pairs are disulfide-bonded: Cys264–Cys287, Cys266–Cys335, and Cys309–Cys336. Positions 346–446 are disordered; it reads VLEPGRPASA…GASGTGDAEG (101 aa). Asn372 is a glycosylation site (N-linked (GlcNAc...) asparagine). The span at 413-429 shows a compositional bias: basic residues; it reads PRRRPGCSRKNRTRSHC. Positions 434–445 are enriched in gly residues; the sequence is AGSGASGTGDAE. The GPI-anchor amidated serine moiety is linked to residue Ser447. The propeptide at 448–473 is removed in mature form; sequence GALPALACSLAPLGLALVLWTVLGPC.

Belongs to the Nogo receptor family. Homodimer. Interacts with MAG. Interacts with RTN4. Interacts with NGFR. Interacts with LINGO1. Interacts with KIAA0319L. Interacts with OLFM1; this inhibits interaction with LINGO1 and NGFR. Interacts with OMG. In terms of processing, N-glycosylated. O-glycosylated. Contains terminal sialic acid groups on its glycan chains. As to expression, detected in embryonic hippocampus neurons. Detected in brain (at protein level). Detected in neurons in the neocortex, in hippocampus, dorsal thalamus, cerebellum granule cell layer and the mitral cell layer in the olfactory bulb. Detected in brain, dorsal root ganglion and heart.

The protein resides in the cell membrane. The protein localises to the membrane raft. It localises to the cell projection. Its subcellular location is the dendrite. It is found in the axon. The protein resides in the perikaryon. Receptor for RTN4, OMG and MAG. Functions as a receptor for the sialylated gangliosides GT1b and GM1. Besides, functions as a receptor for chondroitin sulfate proteoglycans. Can also bind heparin. Intracellular signaling cascades are triggered via the coreceptor NGFR. Signaling mediates activation of Rho and downstream reorganization of the actin cytoskeleton. Mediates axonal growth inhibition. Mediates axonal growth inhibition and plays a role in regulating axon regeneration and neuronal plasticity in the adult central nervous system. Plays a role in postnatal brain development. Required for normal axon migration across the brain midline and normal formation of the corpus callosum. Protects motoneurons against apoptosis; protection against apoptosis is probably mediated via interaction with MAG. Acts in conjunction with RTN4 and LINGO1 in regulating neuronal precursor cell motility during cortical development. Like other family members, plays a role in restricting the number dendritic spines and the number of synapses that are formed during brain development. In Mus musculus (Mouse), this protein is Reticulon-4 receptor (Rtn4r).